The chain runs to 90 residues: Probable Fe(2+)-trafficking protein (90 aa).

This sequence belongs to the Fe(2+)-trafficking protein family.

Could be a mediator in iron transactions between iron acquisition and iron-requiring processes, such as synthesis and/or repair of Fe-S clusters in biosynthetic enzymes. The polypeptide is Probable Fe(2+)-trafficking protein (Saccharophagus degradans (strain 2-40 / ATCC 43961 / DSM 17024)).